Reading from the N-terminus, the 264-residue chain is Thiazole synthase (264 aa).

The active-site Schiff-base intermediate with DXP is Lys-106. 1-deoxy-D-xylulose 5-phosphate is bound by residues Gly-167, 193–194 (AG), and 215–216 (NS).

This sequence belongs to the ThiG family. As to quaternary structure, homotetramer. Forms heterodimers with either ThiH or ThiS.

The protein localises to the cytoplasm. The enzyme catalyses [ThiS sulfur-carrier protein]-C-terminal-Gly-aminoethanethioate + 2-iminoacetate + 1-deoxy-D-xylulose 5-phosphate = [ThiS sulfur-carrier protein]-C-terminal Gly-Gly + 2-[(2R,5Z)-2-carboxy-4-methylthiazol-5(2H)-ylidene]ethyl phosphate + 2 H2O + H(+). It functions in the pathway cofactor biosynthesis; thiamine diphosphate biosynthesis. Its function is as follows. Catalyzes the rearrangement of 1-deoxy-D-xylulose 5-phosphate (DXP) to produce the thiazole phosphate moiety of thiamine. Sulfur is provided by the thiocarboxylate moiety of the carrier protein ThiS. In vitro, sulfur can be provided by H(2)S. The protein is Thiazole synthase of Prochlorococcus marinus (strain MIT 9312).